A 450-amino-acid chain; its full sequence is Exodeoxyribonuclease 7 large subunit (450 aa).

It belongs to the XseA family. In terms of assembly, heterooligomer composed of large and small subunits.

The protein resides in the cytoplasm. It catalyses the reaction Exonucleolytic cleavage in either 5'- to 3'- or 3'- to 5'-direction to yield nucleoside 5'-phosphates.. Functionally, bidirectionally degrades single-stranded DNA into large acid-insoluble oligonucleotides, which are then degraded further into small acid-soluble oligonucleotides. The chain is Exodeoxyribonuclease 7 large subunit from Shewanella frigidimarina (strain NCIMB 400).